The primary structure comprises 67 residues: MSQPLTVECPTCGAPVEWTAANINRPFCSDRCKLIDLGAWAAEEHKIPVSPDAEDELFSEELPPRAH.

Zn(2+) contacts are provided by Cys9, Cys12, Cys28, and Cys32. Residues 48–67 (PVSPDAEDELFSEELPPRAH) form a disordered region.

This sequence belongs to the DNA gyrase inhibitor YacG family. In terms of assembly, interacts with GyrB. Requires Zn(2+) as cofactor.

In terms of biological role, inhibits all the catalytic activities of DNA gyrase by preventing its interaction with DNA. Acts by binding directly to the C-terminal domain of GyrB, which probably disrupts DNA binding by the gyrase. The polypeptide is DNA gyrase inhibitor YacG (Pseudomonas fluorescens (strain ATCC BAA-477 / NRRL B-23932 / Pf-5)).